The chain runs to 475 residues: Ankyrin repeat, SAM and basic leucine zipper domain-containing protein 1 (475 aa).

Positions 1–10 (MAAGALRGLA) are enriched in low complexity. The segment at 1–23 (MAAGALRGLAVAGGGESSESEDD) is disordered. 3 positions are modified to phosphoserine: Ser17, Ser18, and Ser20. ANK repeat units follow at residues 45 to 74 (EKNE…SVDS), 78 to 107 (YGWT…NASF), 110 to 144 (DKQT…DPNV), 148 to 177 (RLMT…EVNT), 181 to 210 (NGYT…NKML), and 214 to 243 (DGKI…PLEG). The 63-residue stretch at 272–334 (SYTAFGDLEI…KILSALKELE (63 aa)) folds into the SAM domain.

In terms of assembly, interacts with DDX4, PIWIL1, RANBP9 and TDRD1.

The protein resides in the cytoplasm. Functionally, plays a central role during spermatogenesis by repressing transposable elements and preventing their mobilization, which is essential for the germline integrity. Acts via the piRNA metabolic process, which mediates the repression of transposable elements during meiosis by forming complexes composed of piRNAs and Piwi proteins and governs the methylation and subsequent repression of transposons. Its association with pi-bodies suggests a participation in the primary piRNAs metabolic process. Required prior to the pachytene stage to facilitate the production of multiple types of piRNAs, including those associated with repeats involved in the regulation of retrotransposons. May act by mediating protein-protein interactions during germ cell maturation. This chain is Ankyrin repeat, SAM and basic leucine zipper domain-containing protein 1 (ASZ1), found in Otolemur garnettii (Small-eared galago).